Reading from the N-terminus, the 631-residue chain is tRNA uridine 5-carboxymethylaminomethyl modification enzyme MnmG (631 aa).

FAD is bound by residues 15–20 (GGGHAG), V127, and S182. 275–289 (GPRYCPSIEDKIVRF) is a binding site for NAD(+). Q372 serves as a coordination point for FAD.

Belongs to the MnmG family. Homodimer. Heterotetramer of two MnmE and two MnmG subunits. FAD serves as cofactor.

It localises to the cytoplasm. Its function is as follows. NAD-binding protein involved in the addition of a carboxymethylaminomethyl (cmnm) group at the wobble position (U34) of certain tRNAs, forming tRNA-cmnm(5)s(2)U34. This chain is tRNA uridine 5-carboxymethylaminomethyl modification enzyme MnmG, found in Buchnera aphidicola subsp. Schizaphis graminum (strain Sg).